Here is a 747-residue protein sequence, read N- to C-terminus: Beta-glucosidase BoGH3A (747 aa).

The N-terminal stretch at 1–26 is a signal peptide; that stretch reads MIIGIMKTFLLTICFLSVQTGMVAIA. Aspartate 273 is a catalytic residue.

The protein belongs to the glycosyl hydrolase 3 family.

It localises to the periplasm. It catalyses the reaction Hydrolysis of terminal, non-reducing beta-D-glucosyl residues with release of beta-D-glucose.. Its pathway is glucan metabolism; xyloglucan degradation. Functionally, catalyzes the hydrolysis of terminal, non-reducing beta-D-glucosyl residues with release of beta-D-glucose in xyloglucan degradation, leading to remove the backbone 'G' units. This chain is Beta-glucosidase BoGH3A, found in Bacteroides ovatus (strain ATCC 8483 / DSM 1896 / JCM 5824 / BCRC 10623 / CCUG 4943 / NCTC 11153).